Consider the following 274-residue polypeptide: Large ribosomal subunit protein uL2cz/uL2cy (274 aa).

The disordered stretch occupies residues 225-274; sequence NPVDHPHGGGEGRAPIGRKKPTTPWGYPALGRRSRKRKKYSDSFILRRRK.

This sequence belongs to the universal ribosomal protein uL2 family. In terms of assembly, part of the 50S ribosomal subunit.

The protein resides in the plastid. The protein localises to the chloroplast. This Dioscorea elephantipes (Elephant's foot yam) protein is Large ribosomal subunit protein uL2cz/uL2cy (rpl2-A).